Here is a 289-residue protein sequence, read N- to C-terminus: Probable phosphoribulokinase (289 aa).

12–20 (GSSGAGTTT) provides a ligand contact to ATP.

It belongs to the phosphoribulokinase family.

It catalyses the reaction D-ribulose 5-phosphate + ATP = D-ribulose 1,5-bisphosphate + ADP + H(+). This is Probable phosphoribulokinase (prkB) from Escherichia coli (strain K12).